The sequence spans 232 residues: Small ribosomal subunit protein uS2 (232 aa).

This sequence belongs to the universal ribosomal protein uS2 family.

This chain is Small ribosomal subunit protein uS2, found in Syntrophomonas wolfei subsp. wolfei (strain DSM 2245B / Goettingen).